The sequence spans 454 residues: Nuclear envelope integral membrane protein (454 aa).

Residues 1-18 form the signal peptide; the sequence is MHSAGLLMLTVAGYFTSG. Asn-38 carries an N-linked (GlcNAc...) asparagine glycan. A run of 5 helical transmembrane segments spans residues 138–158, 166–186, 197–217, 231–251, and 280–300; these read IPLDLWRLAQFAVGILILFSA, VFYYLVGIVIGICASLLVVIY, MMYGVLIGGWTIGFYVIKQLA, VLGYLVITGLISFLICYRIGP, and TSAVIFIMVLVFVAHYFPISW. Over residues 388–405 the composition is skewed to acidic residues; it reads SMDAAPEEESVEEPEEDK. The tract at residues 388-454 is disordered; it reads SMDAAPEEES…QEVDLRQVVQ (67 aa). Positions 414 to 424 are enriched in polar residues; the sequence is NSQFRYQQAAR. Acidic residues predominate over residues 428 to 446; sequence PEPESESDDSEEEEFFEQE.

The protein belongs to the NEMP family. In terms of assembly, interacts with OTE. Expressed in both germline and somatic cells in the larval testis and prepupal ovary (at protein level). Also detected in the larval eye and larval wing disk (at protein level).

It localises to the nucleus inner membrane. In terms of biological role, contributes to nuclear envelope stiffness in germ cells. Required for male and female fertility. The protein is Nuclear envelope integral membrane protein of Drosophila melanogaster (Fruit fly).